The chain runs to 172 residues: Large ribosomal subunit protein uL10 (172 aa).

Belongs to the universal ribosomal protein uL10 family. In terms of assembly, part of the ribosomal stalk of the 50S ribosomal subunit. The N-terminus interacts with L11 and the large rRNA to form the base of the stalk. The C-terminus forms an elongated spine to which L12 dimers bind in a sequential fashion forming a multimeric L10(L12)X complex.

Its function is as follows. Forms part of the ribosomal stalk, playing a central role in the interaction of the ribosome with GTP-bound translation factors. This Syntrophotalea carbinolica (strain DSM 2380 / NBRC 103641 / GraBd1) (Pelobacter carbinolicus) protein is Large ribosomal subunit protein uL10.